Consider the following 131-residue polypeptide: Small ribosomal subunit protein eS17 (131 aa).

It belongs to the eukaryotic ribosomal protein eS17 family.

This chain is Small ribosomal subunit protein eS17 (RPS17), found in Theileria annulata.